The primary structure comprises 273 residues: SPRY domain-containing SOCS box protein 1 (273 aa).

A Phosphotyrosine; by MET modification is found at tyrosine 31. The region spanning 33 to 231 (KPTRLDLLLD…IRMRYLNGLD (199 aa)) is the B30.2/SPRY domain. The SOCS box domain maps to 232 to 273 (PEPLPLMDLCRRSVRLALGRERLGEIHTLPLPASLKAYLLYQ).

It belongs to the SPSB family. As to quaternary structure, component of the probable ECS(SPSB1) E3 ubiquitin-protein ligase complex which contains CUL5, RNF7/RBX2, Elongin BC complex and SPSB1. Interacts with CUL5, RNF7, ELOB and ELOC. Directly interacts with MET tyrosine kinase domain in the presence and in the absence of HGF, however HGF treatment has a positive effect on this interaction. When phosphorylated, interacts with RASA1 without affecting its stability. Interacts (via B30.2/SPRY domain) with PAWR; this interaction is direct and occurs in association with the Elongin BC complex. Interacts with NOS2. Interacts with EPHB2.

The protein localises to the cytoplasm. The protein resides in the cytosol. It participates in protein modification; protein ubiquitination. Substrate recognition component of a SCF-like ECS (Elongin BC-CUL2/5-SOCS-box protein) E3 ubiquitin-protein ligase complex which mediates the ubiquitination and subsequent proteasomal degradation of target proteins. Negatively regulates nitric oxide (NO) production and limits cellular toxicity in activated macrophages by mediating the ubiquitination and proteasomal degradation of NOS2. Acts as a bridge which links NOS2 with the ECS E3 ubiquitin ligase complex components ELOC and CUL5. The polypeptide is SPRY domain-containing SOCS box protein 1 (SPSB1) (Homo sapiens (Human)).